The primary structure comprises 145 residues: MKFSYAIAAVVAAAASVQAVETNGQRMARGLKPLPPRNIHRRASRTNEARGATPSGTPSGGDYNCNTGSVQCCNQVSKANDTVISAILGLLGIGGVADDVLVGLKCSPLSVVGLGSGNSCSQRPVCCENNSKGGLVSIGCIPITL.

The N-terminal stretch at 1 to 19 (MKFSYAIAAVVAAAASVQA) is a signal peptide. 4 disulfides stabilise this stretch: C65-C126, C72-C120, C73-C106, and C127-C140. Residues N80 and N129 are each glycosylated (N-linked (GlcNAc...) asparagine).

Belongs to the fungal hydrophobin family. As to quaternary structure, self-assembles to form functional amyloid fibrils called rodlets. Self-assembly into fibrillar rodlets occurs spontaneously at hydrophobic:hydrophilic interfaces and the rodlets further associate laterally to form amphipathic monolayers.

It is found in the secreted. The protein resides in the cell wall. Its function is as follows. Aerial growth, conidiation, and dispersal of filamentous fungi in the environment rely upon a capability of their secreting small amphipathic proteins called hydrophobins (HPBs) with low sequence identity. Class I can self-assemble into an outermost layer of rodlet bundles on aerial cell surfaces, conferring cellular hydrophobicity that supports fungal growth, development and dispersal; whereas Class II form highly ordered films at water-air interfaces through intermolecular interactions but contribute nothing to the rodlet structure. Hyd1 is a class I hydrophobin that is crucial for the initiation of primordia formation. Plays also important roles in nitrogen regulation and resistance to abiotic stresses. This is Class I hydrophobin 1 from Ganoderma lucidum (Ling zhi medicinal fungus).